The primary structure comprises 1603 residues: Gag-Pol polyprotein (1603 aa).

The span at V128–P141 shows a compositional bias: basic and acidic residues. Residues V128 to V150 are disordered. The PPXY motif signature appears at P172 to Y175. Positions L180 to L184 match the LYPX(n)L motif motif. Residues Y181 to P217 form a disordered region. 3 involved in capsid protein dimerization regions span residues P217–T259, H290–V298, and G351–L362. Residues L219–L229 carry the Nuclear export signal motif. 2 CCHC-type zinc fingers span residues G507–K524 and E533–K550. The Nuclear/nucleolar localization signal motif lies at K524–K527. Residues H543–A575 are disordered. Positions I609–C690 constitute a Peptidase A2 domain. The For protease activity; shared with dimeric partner role is filled by D614. Residues L750–L938 enclose the Reverse transcriptase domain. 7 residues coordinate Mg(2+): D815, D890, D891, D1158, E1192, D1213, and D1272. The RNase H type-1 domain maps to P1149 to Y1280. An Integrase-type zinc finger spans residues Y1280–N1321. Residues H1289, H1293, C1317, and C1320 each contribute to the Zn(2+) site. Residues R1333–T1496 form the Integrase catalytic domain. Mg(2+)-binding residues include D1344, D1401, and E1437. Positions P1502 to T1550 form a DNA-binding region, integrase-type. The tract at residues D1548 to G1567 is involved in homooctamerization. Residues S1569 to S1603 form a disordered region.

In terms of assembly, active as a homodimer. As to quaternary structure, homodimer. Homomultimer. Homohexamer. Homodimer; further associates as a homooctamer. In terms of assembly, heterodimer of alpha and beta subunits. Three forms of RT exist: alpha-alpha (alpha-Pol), beta-beta (beta-Pol), and alpha-beta, with the major form being the heterodimer. Both the polymerase and RNase H active sites are located in the alpha subunit of heterodimeric RT alpha-beta. Mg(2+) serves as cofactor. Requires Mn(2+) as cofactor. Specific enzymatic cleavages in vivo yield mature proteins. Post-translationally, capsid protein p27: The cleavage at the C-terminus is slowly trimmed by the viral protease, sometimes being cut internally thereby generating the short version of the capsid protein and a capsid protein C-terminally extended by 3 amino acids in a ratio of 2:1.

Its subcellular location is the virion. It catalyses the reaction DNA(n) + a 2'-deoxyribonucleoside 5'-triphosphate = DNA(n+1) + diphosphate. It carries out the reaction Endonucleolytic cleavage to 5'-phosphomonoester.. Its function is as follows. Capsid protein p27: Self-associates to form the irregular polyhedron core composed of hexamers and pentamers, that encapsulates the genomic RNA-nucleocapsid complex. Assembles as a tube in vitro. Binds to inositol hexakisphosphate (IP6), which allows the assembly of the polyhedral capsid. Plays a role in the oligomerization of the Gag polyprotein and in the stabilization of the immature particle. Essential layering element during tube assembly. Allows the cooperative binging of Gag to the host plasma membrane. Functionally, binds strongly to viral nucleic acids and promotes their packaging. Plays a role in the maturation-stabilization of the viral dimeric RNA via highly structured zinc-binding motifs. In terms of biological role, the aspartyl protease mediates proteolytic cleavages of Gag and Gag-Pol polyproteins during or shortly after the release of the virion from the plasma membrane. Cleavages take place as an ordered, step-wise cascade to yield mature proteins. This process is called maturation. Displays maximal activity during the budding process just prior to particle release from the cell. Its function is as follows. Catalyzes viral DNA integration into the host chromosome, by performing a series of DNA cutting and joining reactions. This recombination event is an essential step in the viral replication cycle. Has a strong preference for using the 3'-OH at the viral DNA end as a nucleophile. This is Gag-Pol polyprotein (gag-pol) from Gallus gallus (Chicken).